The sequence spans 162 residues: RNA replication protein (162 aa).

The protein belongs to the potexvirus/carlavirus RNA replication protein family.

It catalyses the reaction RNA(n) + a ribonucleoside 5'-triphosphate = RNA(n+1) + diphosphate. It carries out the reaction ATP + H2O = ADP + phosphate + H(+). Its function is as follows. RNA replication. The central part of this protein possibly functions as an ATP-binding helicase. The sequence is that of RNA replication protein from Lilium formosanum.